Here is a 135-residue protein sequence, read N- to C-terminus: Meiotically up-regulated gene 116 protein (135 aa).

The helical transmembrane segment at 20–39 (YFHSFHCFFLLCFTVMLCVV) threads the bilayer. Positions 81-101 (QTPTKKGNKTKKKRKKEKKKE) are disordered. The segment covering 86 to 98 (KGNKTKKKRKKEK) has biased composition (basic residues).

Its subcellular location is the mitochondrion membrane. In terms of biological role, has a role in meiosis. This chain is Meiotically up-regulated gene 116 protein (mug116), found in Schizosaccharomyces pombe (strain 972 / ATCC 24843) (Fission yeast).